A 255-amino-acid chain; its full sequence is Pyridoxine 5'-phosphate synthase (255 aa).

The 3-amino-2-oxopropyl phosphate site is built by N8 and R19. H44 acts as the Proton acceptor in catalysis. R46 and H51 together coordinate 1-deoxy-D-xylulose 5-phosphate. E74 serves as the catalytic Proton acceptor. T111 provides a ligand contact to 1-deoxy-D-xylulose 5-phosphate. The Proton donor role is filled by H202. Residues D203 and 225-226 each bind 3-amino-2-oxopropyl phosphate; that span reads GH.

The protein belongs to the PNP synthase family. In terms of assembly, homooctamer; tetramer of dimers.

Its subcellular location is the cytoplasm. The enzyme catalyses 3-amino-2-oxopropyl phosphate + 1-deoxy-D-xylulose 5-phosphate = pyridoxine 5'-phosphate + phosphate + 2 H2O + H(+). The protein operates within cofactor biosynthesis; pyridoxine 5'-phosphate biosynthesis; pyridoxine 5'-phosphate from D-erythrose 4-phosphate: step 5/5. Its function is as follows. Catalyzes the complicated ring closure reaction between the two acyclic compounds 1-deoxy-D-xylulose-5-phosphate (DXP) and 3-amino-2-oxopropyl phosphate (1-amino-acetone-3-phosphate or AAP) to form pyridoxine 5'-phosphate (PNP) and inorganic phosphate. In Xanthomonas oryzae pv. oryzae (strain MAFF 311018), this protein is Pyridoxine 5'-phosphate synthase.